A 257-amino-acid chain; its full sequence is MGNLFDSSKTLWGNMNHGSSRYSLNGKIMLASVIILFVAVILILCFHSYARWLFRRQNRRIRRRISAHLRSLAAARDPTQSSSSLSPLDPTVLEKIPIFVYSVKTHESPLEECSVCLSEFEEDDEGRVLPKCGHVFHVDCIDTWFRSRSSCPLCRAPVQPAQPVTEPEPVAAVFPSVKPIEDTEAGSSSSSDESESSTPSSSSGSPVRFPMEACEREPIDLVGIIVEIPREFQDSNSDLPADNGSNRRASLKRLWII.

A helical transmembrane segment spans residues 28–48 (IMLASVIILFVAVILILCFHS). The segment at 113 to 155 (CSVCLSEFEEDDEGRVLPKCGHVFHVDCIDTWFRSRSSCPLCR) adopts an RING-type; atypical zinc-finger fold. The tract at residues 181 to 209 (EDTEAGSSSSSDESESSTPSSSSGSPVRF) is disordered. Over residues 185–206 (AGSSSSSDESESSTPSSSSGSP) the composition is skewed to low complexity.

It belongs to the RING-type zinc finger family. ATL subfamily.

Its subcellular location is the membrane. The enzyme catalyses S-ubiquitinyl-[E2 ubiquitin-conjugating enzyme]-L-cysteine + [acceptor protein]-L-lysine = [E2 ubiquitin-conjugating enzyme]-L-cysteine + N(6)-ubiquitinyl-[acceptor protein]-L-lysine.. Its pathway is protein modification; protein ubiquitination. The chain is RING-H2 finger protein ATL5 (ATL5) from Arabidopsis thaliana (Mouse-ear cress).